The sequence spans 361 residues: T-box-containing protein TBX6L (361 aa).

A DNA-binding region (T-box) is located at residues 36–209 (LWMKFHQIGT…NNPFAKGFRE (174 aa)). Disordered regions lie at residues 203 to 259 (FAKG…VKEE) and 280 to 323 (HAFP…QLPS). 2 stretches are compositionally biased toward basic and acidic residues: residues 206–220 (GFREHGKNTRREGRA) and 234–259 (KLPEEKESGAEERDFEKDENVDVKEE). The span at 280 to 290 (HAFPAASPAPA) shows a compositional bias: low complexity.

It localises to the nucleus. May be involved in regulating somitogenesis. The sequence is that of T-box-containing protein TBX6L (TBX6L) from Gallus gallus (Chicken).